The following is a 1252-amino-acid chain: Putative late blight resistance protein homolog R1B-11 (1252 aa).

Residues 543-566 (RYSDSLAFLKNQLQVIQTEFESLQ) are a coiled coil. NB-ARC domains follow at residues 684–736 (SVRR…RSRI) and 786–830 (SYHV…SSEG). LRR repeat units follow at residues 955-980 (FKFL…PYLR), 998-1026 (LWNL…VWDM), 1077-1100 (LKHL…KVSS), 1103-1125 (FPKL…ADDA), 1126-1149 (FPNL…CFTD), 1187-1212 (LVII…RLSS), and 1213-1236 (LPGI…DVDA). In terms of domain architecture, HMA spans 1188–1252 (VIIKKLVLKF…VGKLNKRDML (65 aa)).

The protein belongs to the disease resistance NB-LRR family.

The protein localises to the cytoplasm. It is found in the membrane. Functionally, confers resistance to late blight (Phytophthora infestans) races carrying the avirulence gene Avr1. Resistance proteins guard the plant against pathogens that contain an appropriate avirulence protein via an indirect interaction with this avirulence protein. That triggers a defense system including the hypersensitive response, which restricts the pathogen growth. The chain is Putative late blight resistance protein homolog R1B-11 (R1B-11) from Solanum demissum (Wild potato).